A 291-amino-acid chain; its full sequence is Acetyl-coenzyme A carboxylase carboxyl transferase subunit beta (291 aa).

Positions Ile29 to Asn291 constitute a CoA carboxyltransferase N-terminal domain. Cys33, Cys36, Cys52, and Cys55 together coordinate Zn(2+). The C4-type zinc-finger motif lies at Cys33–Cys55.

This sequence belongs to the AccD/PCCB family. Acetyl-CoA carboxylase is a heterohexamer composed of biotin carboxyl carrier protein (AccB), biotin carboxylase (AccC) and two subunits each of ACCase subunit alpha (AccA) and ACCase subunit beta (AccD). Requires Zn(2+) as cofactor.

It localises to the cytoplasm. It carries out the reaction N(6)-carboxybiotinyl-L-lysyl-[protein] + acetyl-CoA = N(6)-biotinyl-L-lysyl-[protein] + malonyl-CoA. It participates in lipid metabolism; malonyl-CoA biosynthesis; malonyl-CoA from acetyl-CoA: step 1/1. Component of the acetyl coenzyme A carboxylase (ACC) complex. Biotin carboxylase (BC) catalyzes the carboxylation of biotin on its carrier protein (BCCP) and then the CO(2) group is transferred by the transcarboxylase to acetyl-CoA to form malonyl-CoA. The chain is Acetyl-coenzyme A carboxylase carboxyl transferase subunit beta from Bacillus pumilus (strain SAFR-032).